The primary structure comprises 400 residues: Na(+)/H(+) antiporter NhaA (400 aa).

12 helical membrane-spanning segments follow: residues 26–46 (AGGILLLFSAVVAMLLANSPL), 71–91 (LIHWINDGFMAVFFVLVGMEV), 107–127 (IFPAIAAIGGMVIPAVVYWFI), 137–157 (GWAIPMATDIAFALGIMALLS), 166–186 (IFLLALAIIDDLGAIVVIALF), 189–209 (HGLSVQALIFSAVAIIVLILL), 212–232 (FKVSALCAYMVVGAILWASVL), 233–253 (KSGVHATLAGVIIGFSIPLKG), 273–293 (FVILPLFAFANAGVSFAGIDV), 299–319 (PLLLAIASGLIIGKPVGIFGF), 340–360 (IFAVAVLCGIGFTMSMFLASL), and 373–393 (LSRLGILLGSTVSAILGYLFL).

The protein belongs to the NhaA Na(+)/H(+) (TC 2.A.33) antiporter family.

Its subcellular location is the cell inner membrane. The enzyme catalyses Na(+)(in) + 2 H(+)(out) = Na(+)(out) + 2 H(+)(in). Functionally, na(+)/H(+) antiporter that extrudes sodium in exchange for external protons. This Haemophilus influenzae (strain 86-028NP) protein is Na(+)/H(+) antiporter NhaA.